A 978-amino-acid polypeptide reads, in one-letter code: Receptor like protein 21 (978 aa).

Positions 1–27 (MLLAMEGKLFLCQYLIWVMLLLGQLHG) are cleaved as a signal peptide. Residues 28 to 930 (CTSCIEKERE…EEDDKAAIDM (903 aa)) are Extracellular-facing. 5 N-linked (GlcNAc...) asparagine glycosylation sites follow: asparagine 64, asparagine 79, asparagine 102, asparagine 116, and asparagine 155. LRR repeat units follow at residues 141-167 (LRNLKIMDLSTNYFNYSTFPFLNAATS), 169-189 (TTLILTYNEMDGPFPIKGLKD), 190-213 (LTNLELLDLRANKLNGSMQELIHL), 214-237 (KKLKALDLSSNKFSSSMELQELQN), 238-262 (LINLEVLGLAQNHVDGPIPIEVFCK), 264-287 (KNLRDLDLKGNHFVGQIPLCLGSL), 288-310 (KKLRVLDLSSNQLSGDLPSSFSS), 312-335 (ESLEYLSLSDNNFDGSFSLNPLTN), 337-361 (TNLKLFKLSSRSHTIQVKMESTWQP), 362-385 (NFQLSVVVLRFCSLEKIPSFLLYQ), 386-409 (KKLRLVDLSSNNLSGNIPTWLLTN), 410-432 (NPELEVLQLQNNSFTIFPIPTMV), 433-455 (HNLQIFDFSANNIGKFPDKMDHA), 457-480 (PNLVRLNGSNNGFQGYFPTSIGEM), 481-504 (KNISFLDLSYNNFSGKLPRSFVTG), 506-529 (VSIMFLKLSHNKFSGRFLPRETNF), 530-553 (PSLDVLRMDNNLFTGNIGGGLSNS), 554-577 (TMLRILDMSNNGLSGAIPRWLFEF), 579-601 (YLDYVLISNNFLEGTIPPSLLGM), 602-625 (PFLSFLDLSGNQFSGALPSHVDSE), 627-646 (GIYMFLHNNNFTGPIPDTLL), 647-671 (KSVQILDLRNNKLSGSIPQFDDTQS), 673-693 (NILLLKGNNLTGSIPRELCDL), 694-716 (SNVRLLDLSDNKLNGVIPSCLSN), 788-811 (LRLMYGMDLSNNELSGVIPTELGD), 812-835 (LLKLRTLNLSHNSLLGSIPSSFSK), 837-859 (IDVESLDLSHNMLQGSIPQLLSS), and 860-885 (LTSLAVFDVSSNNLSGIIPQGRQFNT). A glycan (N-linked (GlcNAc...) asparagine) is linked at asparagine 204. An N-linked (GlcNAc...) asparagine glycan is attached at asparagine 335. 2 N-linked (GlcNAc...) asparagine glycosylation sites follow: asparagine 397 and asparagine 420. Residues asparagine 463, asparagine 482, and asparagine 492 are each glycosylated (N-linked (GlcNAc...) asparagine). The N-linked (GlcNAc...) asparagine glycan is linked to asparagine 552. An N-linked (GlcNAc...) asparagine glycan is attached at asparagine 636. N-linked (GlcNAc...) asparagine glycans are attached at residues asparagine 681 and asparagine 716. N-linked (GlcNAc...) asparagine glycosylation occurs at asparagine 819. Asparagine 872 is a glycosylation site (N-linked (GlcNAc...) asparagine). The interval 902–922 (TSRSCETNKSPEEADNGQEEE) is disordered. A helical transmembrane segment spans residues 931 to 951 (MVFYFSTASIYVTALIGVLVL). Residues 952–978 (MCFDCPWRRAWLRIVDAFIASAKHVLP) are Cytoplasmic-facing.

It belongs to the RLP family.

The protein localises to the cell membrane. This chain is Receptor like protein 21, found in Arabidopsis thaliana (Mouse-ear cress).